The following is a 392-amino-acid chain: ATP phosphoribosyltransferase regulatory subunit (392 aa).

It belongs to the class-II aminoacyl-tRNA synthetase family. HisZ subfamily. Heteromultimer composed of HisG and HisZ subunits.

It is found in the cytoplasm. The protein operates within amino-acid biosynthesis; L-histidine biosynthesis; L-histidine from 5-phospho-alpha-D-ribose 1-diphosphate: step 1/9. Its function is as follows. Required for the first step of histidine biosynthesis. May allow the feedback regulation of ATP phosphoribosyltransferase activity by histidine. The sequence is that of ATP phosphoribosyltransferase regulatory subunit from Synechococcus sp. (strain WH7803).